A 169-amino-acid polypeptide reads, in one-letter code: Proepiregulin (169 aa).

The signal sequence occupies residues 1 to 29 (MTAGRRMEMLCAGRVPALLLCLGFHLLQA). A propeptide spanning residues 30–62 (VLSTTVIPSCIPGESSDNCTALVQTEDNPRVAQ) is cleaved from the precursor. Residue Asn-47 is glycosylated (N-linked (GlcNAc...) asparagine). The Extracellular portion of the chain corresponds to 60–119 (VAQVSITKCSSDMNGYCLHGQCIYLVDMSQNYCRCEVGYTGVRCEHFFLTVHQPLSKEYV). Residues 64 to 104 (SITKCSSDMNGYCLHGQCIYLVDMSQNYCRCEVGYTGVRCE) form the EGF-like domain. Disulfide bonds link Cys-68–Cys-81, Cys-76–Cys-92, and Cys-94–Cys-103. Positions 109–169 (TVHQPLSKEY…TSGDPELPQV (61 aa)) are cleaved as a propeptide — removed in mature form. Residues 120–140 (ALTVILIILFLITVVGSTYYF) form a helical membrane-spanning segment. The Cytoplasmic segment spans residues 141-169 (CRWYRNRKSKEPKKEYERVTSGDPELPQV).

As to quaternary structure, interacts with EGFR and ERBB4. In normal adults, expressed predominantly in the placenta and peripheral blood leukocytes. High levels were detected in carcinomas of the bladder, lung, kidney and colon.

It is found in the secreted. The protein resides in the extracellular space. Its subcellular location is the cell membrane. Its function is as follows. Ligand of the EGF receptor/EGFR and ERBB4. Stimulates EGFR and ERBB4 tyrosine phosphorylation. Contributes to inflammation, wound healing, tissue repair, and oocyte maturation by regulating angiogenesis and vascular remodeling and by stimulating cell proliferation. In Homo sapiens (Human), this protein is Proepiregulin (EREG).